Here is a 274-residue protein sequence, read N- to C-terminus: HTH-type transcriptional regulator GadX (274 aa).

An HTH araC/xylS-type domain is found at 145 to 242 (TRVCTVINNN…GMTPTEYQER (98 aa)). DNA-binding regions (H-T-H motif) lie at residues 162-183 (ARIASELLMSPSLLKKKLREEE) and 209-232 (IKRVAVSCGYHSVSYFIYVFRNYY).

Homodimer.

Positively regulates the expression of about fifteen genes involved in acid resistance such as gadA, gadB and gadC. Depending on the conditions (growth phase and medium), can repress gadW. In Escherichia coli O157:H7, this protein is HTH-type transcriptional regulator GadX (gadX).